The chain runs to 161 residues: Nucleotide-binding protein Bmul_0741/BMULJ_02519 (161 aa).

This sequence belongs to the YajQ family.

Functionally, nucleotide-binding protein. This Burkholderia multivorans (strain ATCC 17616 / 249) protein is Nucleotide-binding protein Bmul_0741/BMULJ_02519.